A 147-amino-acid chain; its full sequence is MTNPQFAGHPFGTTVTAETLRNTFAPLTQWEDKYRQLIMLGKQLPALPDELKAQAKEIAGCENRVWLGYTVAENGKMHFFGDSEGRIVRGLLAVLLTAVEGKTAAELQAQSPLALFDELGLRAQLSASRSQGLNALSEAIIAATKQV.

Cys-61 (cysteine persulfide intermediate) is an active-site residue. Cysteine persulfide is present on Cys-61.

The protein belongs to the SufE family. As to quaternary structure, homodimer. Forms a heterodimer with CsdA. Interacts with CsdA and with TcdA/CsdL.

Functionally, stimulates the cysteine desulfurase activity of CsdA. Contains a cysteine residue (Cys-61) that acts to accept sulfur liberated via the desulfurase activity of CsdA. May be able to transfer sulfur to TcdA/CsdL. Seems to support the function of TcdA in the generation of cyclic threonylcarbamoyladenosine at position 37 (ct(6)A37) in tRNAs that read codons beginning with adenine. Does not appear to participate in Fe/S biogenesis. The sequence is that of Sulfur acceptor protein CsdE (csdE) from Escherichia coli (strain K12).